A 2255-amino-acid chain; its full sequence is Non-reducing polyketide synthase nvfA (2255 aa).

Residues 13-251 are N-terminal acylcarrier protein transacylase domain (SAT); it reads ILFGPQSSDM…HHPDHTAAVE (239 aa). A Ketosynthase family 3 (KS3) domain is found at 365-781; that stretch reads VRPIAVTGMA…GSNAAIVLRQ (417 aa). Active-site for beta-ketoacyl synthase activity residues include Cys530, His665, and His704. The tract at residues 887 to 1187 is malonyl-CoA:ACP transacylase (MAT) domain; sequence LCFGGQNGNT…QASDLKSPQA (301 aa). The For acyl/malonyl transferase activity role is filled by Ser974. An N-terminal hotdog fold region spans residues 1229-1357; the sequence is EPMGLVQVLE…GRISLHPFDS (129 aa). The PKS/mFAS DH domain occupies 1229–1536; it reads EPMGLVQVLE…FTSVSIRALT (308 aa). The interval 1232–1535 is product template (PT) domain; the sequence is GLVQVLEKRP…TFTSVSIRAL (304 aa). His1262 functions as the Proton acceptor; for dehydratase activity in the catalytic mechanism. The C-terminal hotdog fold stretch occupies residues 1385–1536; the sequence is SSSGLKGSAV…FTSVSIRALT (152 aa). Asp1443 acts as the Proton donor; for dehydratase activity in catalysis. Residues 1581 to 1655 enclose the Carrier domain; sequence TNKFPAIQAM…CLVQAIFPGA (75 aa). Ser1615 bears the O-(pantetheine 4'-phosphoryl)serine mark. Positions 1809 to 2042 are methyltransferase (CMeT) domain; the sequence is HHASEHTLLR…GYNWVNWSCN (234 aa). The tract at residues 2109–2227 is thioesterase (TE) domain; that stretch reads LLIHGGGHVM…ILSFYCPTDY (119 aa). The active-site For thioesterase activity is Ser2194.

It carries out the reaction 3 malonyl-CoA + acetyl-CoA + 2 S-adenosyl-L-methionine = 3,5-dimethylorsellinate + 2 S-adenosyl-L-homocysteine + 3 CO2 + 4 CoA. The protein operates within secondary metabolite biosynthesis; terpenoid biosynthesis. In terms of biological role, non-reducing polyketide synthase; part of the gene cluster that mediates the biosynthesis of novofumigatonin, a heavily oxygenated meroterpenoid containing a unique orthoester moiety. The first step of the pathway is the synthesis of 3,5-dimethylorsellinic acid (DMOA) by the polyketide synthase nvfA via condensation of one acetyl-CoA starter unit with 3 malonyl-CoA units and 2 methylations. DMOA is then converted to farnesyl-DMOA by the farnesyltransferase nvfB. Epoxydation by FAD-dependent monooxygenase nvfK, followed by a protonation-initiated cyclization catalyzed by the terpene cyclase nvfL leads to the production of asnavolin H. The short chain dehydrogenase nvfC then as a 3-OH dehydrogenase of asnovolin H to yield chemesin D. There are two branches to synthesize asnovolin A from chemesin D. In one branch, chemesin D undergoes Baeyer-Villiger oxidation by nvfH, methylation by nvfJ, and enoyl reduction by the nvfM D enoylreductase that reduces the double bond between C-5'and C-6', to form respectively asnovolin I, asnovolin K, and asnovolin A. In the other branch, the methylation precedes the Baeyer-Villiger oxidation and the enoyl reduction to yield asnovolin A via the asnovolin J intermediate. Asnovolin A is further converted to fumigatonoid A by the Fe(II)/2-oxoglutarate-dependent dioxygenase nvfI that catalyzes an endoperoxidation reaction. The alpha/beta hydrolase nvfD then acts as an epimerase that converts fumigatonoid A to its C-5' epimer, which then undergoes spontaneous or nvfD-catalyzed lactonization. The following step utilizes the ketoreductase nvfG to produce fumigatonoid B. The dioxygenase nvfE further converts fumigatonoid B into fumigatonoid C. Finally the Fe(II)/2-oxoglutarate-dependent dioxygenase nvfF catalyzes two rounds of oxidation to transform fumigatonoid C into the end product, novofumigatonin A. In Aspergillus novofumigatus (strain IBT 16806), this protein is Non-reducing polyketide synthase nvfA.